The sequence spans 241 residues: Pyridoxine 5'-phosphate synthase (241 aa).

Asn-7 lines the 3-amino-2-oxopropyl phosphate pocket. 9 to 10 is a binding site for 1-deoxy-D-xylulose 5-phosphate; sequence DH. Arg-18 is a 3-amino-2-oxopropyl phosphate binding site. Residue His-43 is the Proton acceptor of the active site. 1-deoxy-D-xylulose 5-phosphate contacts are provided by Arg-45 and His-50. Catalysis depends on Glu-70, which acts as the Proton acceptor. Thr-100 contributes to the 1-deoxy-D-xylulose 5-phosphate binding site. Residue His-191 is the Proton donor of the active site. 3-amino-2-oxopropyl phosphate is bound by residues Gly-192 and 213–214; that span reads GH.

It belongs to the PNP synthase family. In terms of assembly, homooctamer; tetramer of dimers.

It is found in the cytoplasm. The enzyme catalyses 3-amino-2-oxopropyl phosphate + 1-deoxy-D-xylulose 5-phosphate = pyridoxine 5'-phosphate + phosphate + 2 H2O + H(+). It functions in the pathway cofactor biosynthesis; pyridoxine 5'-phosphate biosynthesis; pyridoxine 5'-phosphate from D-erythrose 4-phosphate: step 5/5. Functionally, catalyzes the complicated ring closure reaction between the two acyclic compounds 1-deoxy-D-xylulose-5-phosphate (DXP) and 3-amino-2-oxopropyl phosphate (1-amino-acetone-3-phosphate or AAP) to form pyridoxine 5'-phosphate (PNP) and inorganic phosphate. In Nitratidesulfovibrio vulgaris (strain ATCC 29579 / DSM 644 / CCUG 34227 / NCIMB 8303 / VKM B-1760 / Hildenborough) (Desulfovibrio vulgaris), this protein is Pyridoxine 5'-phosphate synthase.